A 254-amino-acid chain; its full sequence is MGRKFFVGGNWKCNGTAEEVKKILATLNAADVPSQDVVEVVVSPPYVFLPLVKNELRPDFHVAAQNCWVKKGGAFTGEVSAEMLVNLSIPWVILGHSERRALLGESNEFVGDKVAYALSQGLKVIACVGETLEERESGSTMDVVAAQTKAIADRVKDWTNVVVAYEPVWAIGTGKVASPAQAQEVHAELRKWLAANVSPEVAASTRIIYGGSVNGANCKELGGQPDVDGFLVGGASLKPEFIDIIKAAEVKRNA.

Positions 10 and 12 each coordinate substrate. Histidine 96 acts as the Electrophile in catalysis. The Proton acceptor role is filled by glutamate 166.

The protein belongs to the triosephosphate isomerase family. As to quaternary structure, homodimer.

It is found in the cytoplasm. The catalysed reaction is D-glyceraldehyde 3-phosphate = dihydroxyacetone phosphate. The protein operates within carbohydrate biosynthesis; gluconeogenesis. Its pathway is carbohydrate degradation; glycolysis; D-glyceraldehyde 3-phosphate from glycerone phosphate: step 1/1. This chain is Triosephosphate isomerase, cytosolic (TPIP1), found in Petunia hybrida (Petunia).